The following is a 64-amino-acid chain: Large ribosomal subunit protein bL35 (64 aa).

Residues 1 to 43 (MPKMKSKKSLAKRVIAKKNGTLKRGKAYRSHRATGKTTKQKRH) are disordered.

It belongs to the bacterial ribosomal protein bL35 family.

In Mesoplasma florum (strain ATCC 33453 / NBRC 100688 / NCTC 11704 / L1) (Acholeplasma florum), this protein is Large ribosomal subunit protein bL35.